Reading from the N-terminus, the 221-residue chain is 6-phosphogluconate phosphatase (221 aa).

Aspartate 10 acts as the Nucleophile in catalysis. Mg(2+)-binding residues include aspartate 10, aspartate 12, and aspartate 167. 10 to 12 contacts substrate; sequence DCD.

It belongs to the HAD-like hydrolase superfamily. CbbY/CbbZ/Gph/YieH family. Mg(2+) is required as a cofactor. Requires Mn(2+) as cofactor. It depends on Co(2+) as a cofactor. The cofactor is Zn(2+).

Functionally, catalyzes strongly the dephosphorylation of 6-phosphogluconate (6P-Glu) and slightly the dephosphorylation of dihydroxyacetone phosphate (DHAP) and phosphoenolpyruvate (PEP). Also hydrolyzes both purines (GMP and IMP) and pyrimidines as secondary substrates. The polypeptide is 6-phosphogluconate phosphatase (yieH) (Escherichia coli (strain K12)).